Consider the following 1417-residue polypeptide: Non-structural polyprotein 1AB (1417 aa).

Residues 105–143 are a coiled coil; the sequence is KLIHKANALQERLRLSQEEKATLALDVQFLQHENVRLKE. 5 consecutive transmembrane segments (helical) span residues 155 to 175, 240 to 260, 287 to 307, 314 to 334, and 345 to 365; these read MKWI…GGYA, VFYY…LAIG, VLPT…TLMV, LLAI…LCFM, and GLIA…LTGT. Residues histidine 462, aspartate 490, and serine 552 each act as charge relay system; for serine protease activity in the active site. Positions 588 to 615 form a coiled coil; the sequence is VKAPSQVELLKEEIERLKAQLNSAAENP. Tyrosine 694 carries the O-(5'-phospho-RNA)-tyrosine modification. Positions 753–813 are disordered; sequence NFDQAKPTPA…QKIEPQPYSQ (61 aa). Positions 784-796 are enriched in basic and acidic residues; sequence SQKKEKQPEHEQQ. In terms of domain architecture, RdRp catalytic spans 1162–1288; that stretch reads KHFIEFDWTR…TTPSVPDNYE (127 aa).

This sequence belongs to the astroviridae polyprotein 1AB family. As to quaternary structure, monomer. In terms of processing, cleaved by the viral and host proteases. The protease is probably autocatalytically cleaved.

Its subcellular location is the host membrane. It catalyses the reaction RNA(n) + a ribonucleoside 5'-triphosphate = RNA(n+1) + diphosphate. Its function is as follows. Responsible for the cleavage of the polyprotein into functional products. Functionally, protein covalently attached to the 5' extremity of the genomic and subgenomic RNAs. It may serve as a primer for the replicase. The chain is Non-structural polyprotein 1AB (ORF1) from Human astrovirus-8 (HAstV-8).